A 346-amino-acid polypeptide reads, in one-letter code: RNA polymerase II holoenzyme cyclin-like subunit (346 aa).

The Cyclin N-terminal domain maps to 59–158; the sequence is NLLIKLGRRL…EMDSYLFLHH (100 aa).

It belongs to the cyclin family. Cyclin C subfamily. As to quaternary structure, component of the SRB8-11 complex, a regulatory module of the Mediator complex.

Its subcellular location is the nucleus. Component of the SRB8-11 complex. The SRB8-11 complex is a regulatory module of the Mediator complex which is itself involved in regulation of basal and activated RNA polymerase II-dependent transcription. The SRB8-11 complex may be involved in the transcriptional repression of a subset of genes regulated by Mediator. It may inhibit the association of the Mediator complex with RNA polymerase II to form the holoenzyme complex. The SRB8-11 complex phosphorylates the C-terminal domain (CTD) of the largest subunit of RNA polymerase II. In Scheffersomyces stipitis (strain ATCC 58785 / CBS 6054 / NBRC 10063 / NRRL Y-11545) (Yeast), this protein is RNA polymerase II holoenzyme cyclin-like subunit (SSN8).